We begin with the raw amino-acid sequence, 606 residues long: Prostaglandin G/H synthase 1 (606 aa).

The N-terminal stretch at 1–30 (MSRSSPSLRLPVLLLLLLLLLLPPPPPVLP) is a signal peptide. Positions 38–76 (PVNPCCYFPCQHQGVCVRVALDRYQCDCTRTGYSGPNCT) constitute an EGF-like domain. 4 disulfide bridges follow: Cys-42–Cys-53, Cys-43–Cys-165, Cys-47–Cys-63, and Cys-65–Cys-75. Asn-74, Asn-110, and Asn-150 each carry an N-linked (GlcNAc...) asparagine glycan. The Proton acceptor role is filled by His-213. The active-site For cyclooxygenase activity is the Tyr-391. Position 394 (His-394) interacts with heme b. Asn-416 carries an N-linked (GlcNAc...) asparagine glycan. The cysteines at positions 575 and 581 are disulfide-linked.

The protein belongs to the prostaglandin G/H synthase family. As to quaternary structure, homodimer. Heme b serves as cofactor.

It localises to the microsome membrane. It is found in the endoplasmic reticulum membrane. The enzyme catalyses (5Z,8Z,11Z,14Z)-eicosatetraenoate + AH2 + 2 O2 = prostaglandin H2 + A + H2O. It carries out the reaction (5Z,8Z,11Z,14Z)-eicosatetraenoate + 2 O2 = prostaglandin G2. It catalyses the reaction prostaglandin G2 + AH2 = prostaglandin H2 + A + H2O. The catalysed reaction is (9Z,12Z)-octadecadienoate + AH2 + O2 = (9R)-hydroxy-(10E,12Z)-octadecadienoate + A + H2O. The enzyme catalyses (9Z,12Z)-octadecadienoate + AH2 + O2 = (9S)-hydroxy-(10E,12Z)-octadecadienoate + A + H2O. It carries out the reaction (9Z,12Z)-octadecadienoate + AH2 + O2 = (13S)-hydroxy-(9Z,11E)-octadecadienoate + A + H2O. It catalyses the reaction (9Z,12Z)-octadecadienoate + AH2 + O2 = (13R)-hydroxy-(9Z,11E)-octadecadienoate + A + H2O. Its pathway is lipid metabolism; prostaglandin biosynthesis. The cyclooxygenase activity is inhibited by nonsteroidal anti-inflammatory drugs (NSAIDs) including ibuprofen, flurbiprofen, ketoprofen, naproxen, flurbiprofen, anirolac, fenclofenac and diclofenac. In terms of biological role, dual cyclooxygenase and peroxidase that plays an important role in the biosynthesis pathway of prostanoids, a class of C20 oxylipins mainly derived from arachidonate ((5Z,8Z,11Z,14Z)-eicosatetraenoate, AA, C20:4(n-6)), with a particular role in the inflammatory response. The cyclooxygenase activity oxygenates AA to the hydroperoxy endoperoxide prostaglandin G2 (PGG2), and the peroxidase activity reduces PGG2 to the hydroxy endoperoxide prostaglandin H2 (PGH2), the precursor of all 2-series prostaglandins and thromboxanes. This complex transformation is initiated by abstraction of hydrogen at carbon 13 (with S-stereochemistry), followed by insertion of molecular O2 to form the endoperoxide bridge between carbon 9 and 11 that defines prostaglandins. The insertion of a second molecule of O2 (bis-oxygenase activity) yields a hydroperoxy group in PGG2 that is then reduced to PGH2 by two electrons. Involved in the constitutive production of prostanoids in particular in the stomach and platelets. In gastric epithelial cells, it is a key step in the generation of prostaglandins, such as prostaglandin E2 (PGE2), which plays an important role in cytoprotection. In platelets, it is involved in the generation of thromboxane A2 (TXA2), which promotes platelet activation and aggregation, vasoconstriction and proliferation of vascular smooth muscle cells. Can also use linoleate (LA, (9Z,12Z)-octadecadienoate, C18:2(n-6)) as substrate and produce hydroxyoctadecadienoates (HODEs) in a regio- and stereospecific manner, being (9R)-HODE ((9R)-hydroxy-(10E,12Z)-octadecadienoate) and (13S)-HODE ((13S)-hydroxy-(9Z,11E)-octadecadienoate) its major products. In Oryctolagus cuniculus (Rabbit), this protein is Prostaglandin G/H synthase 1 (PTGS1).